A 447-amino-acid polypeptide reads, in one-letter code: Tubulin beta-2 chain (447 aa).

The GTP site is built by glutamine 11, glutamate 69, serine 138, glycine 142, threonine 143, glycine 144, asparagine 204, and asparagine 226. Glutamate 69 provides a ligand contact to Mg(2+). Residues 426 to 447 (QDAGVDEEEEEYEDDAPLEEEV) form a disordered region. Over residues 429-447 (GVDEEEEEYEDDAPLEEEV) the composition is skewed to acidic residues.

It belongs to the tubulin family. As to quaternary structure, dimer of alpha and beta chains. A typical microtubule is a hollow water-filled tube with an outer diameter of 25 nm and an inner diameter of 15 nM. Alpha-beta heterodimers associate head-to-tail to form protofilaments running lengthwise along the microtubule wall with the beta-tubulin subunit facing the microtubule plus end conferring a structural polarity. Microtubules usually have 13 protofilaments but different protofilament numbers can be found in some organisms and specialized cells. Requires Mg(2+) as cofactor.

The protein resides in the cytoplasm. Its subcellular location is the cytoskeleton. Tubulin is the major constituent of microtubules, a cylinder consisting of laterally associated linear protofilaments composed of alpha- and beta-tubulin heterodimers. Microtubules grow by the addition of GTP-tubulin dimers to the microtubule end, where a stabilizing cap forms. Below the cap, tubulin dimers are in GDP-bound state, owing to GTPase activity of alpha-tubulin. This is Tubulin beta-2 chain (TUB2) from Colletotrichum graminicola (Maize anthracnose fungus).